The chain runs to 918 residues: Cap-specific mRNA (nucleoside-2'-O-)-methyltransferase 1 (918 aa).

Residues 1–18 (MADRKSDEGEDEYQHKEQ) are compositionally biased toward basic and acidic residues. Disordered regions lie at residues 1–56 (MADR…EERA) and 62–81 (KRGYQAGDDEEDDFTAEEEP). A compositionally biased stretch (polar residues) spans 19–30 (MVTNRTSSFQPK). The segment covering 43 to 56 (RAADRREEFMEERA) has biased composition (basic and acidic residues). Residues 68–80 (GDDEEDDFTAEEE) show a composition bias toward acidic residues. Positions 86-132 (PLTVAERLMAAMGHKAGEGLGKHGQGISEPIASSTQRGRTGLGHNAG) constitute a G-patch domain. A RrmJ-type SAM-dependent 2'-O-MTase domain is found at 236-465 (FFQNRAAMKT…ERYITCKGLR (230 aa)). Positions 298 and 379 each coordinate S-adenosyl-L-methionine. Lys-419 (proton acceptor) is an active-site residue.

It carries out the reaction a 5'-end (N(7)-methyl 5'-triphosphoguanosine)-ribonucleoside in mRNA + S-adenosyl-L-methionine = a 5'-end (N(7)-methyl 5'-triphosphoguanosine)-(2'-O-methyl-ribonucleoside) in mRNA + S-adenosyl-L-homocysteine + H(+). Functionally, S-adenosyl-L-methionine-dependent methyltransferase that mediates mRNA cap1 2'-O-ribose methylation to the 5'-cap structure of mRNAs. Methylates the ribose of the first nucleotide of a m(7)GpppG-capped mRNA to produce m(7)GpppNmp (cap1). Cap1 modification is linked to higher levels of translation. This Caenorhabditis elegans protein is Cap-specific mRNA (nucleoside-2'-O-)-methyltransferase 1.